We begin with the raw amino-acid sequence, 80 residues long: Translation initiation factor IF-1 (80 aa).

In terms of domain architecture, S1-like spans 6 to 80; it reads EKKKKDESDS…TSRGRIVYRR (75 aa).

It belongs to the IF-1 family. In terms of assembly, component of the 30S ribosomal translation pre-initiation complex which assembles on the 30S ribosome in the order IF-2 and IF-3, IF-1 and N-formylmethionyl-tRNA(fMet); mRNA recruitment can occur at any time during PIC assembly.

Its subcellular location is the cytoplasm. In terms of biological role, one of the essential components for the initiation of protein synthesis. Stabilizes the binding of IF-2 and IF-3 on the 30S subunit to which N-formylmethionyl-tRNA(fMet) subsequently binds. Helps modulate mRNA selection, yielding the 30S pre-initiation complex (PIC). Upon addition of the 50S ribosomal subunit IF-1, IF-2 and IF-3 are released leaving the mature 70S translation initiation complex. This Deinococcus radiodurans (strain ATCC 13939 / DSM 20539 / JCM 16871 / CCUG 27074 / LMG 4051 / NBRC 15346 / NCIMB 9279 / VKM B-1422 / R1) protein is Translation initiation factor IF-1.